A 329-amino-acid chain; its full sequence is Probable carboxylesterase 8 (329 aa).

The Involved in the stabilization of the negatively charged intermediate by the formation of the oxyanion hole signature appears at 73–75 (HGG). Active-site residues include serine 161, aspartate 264, and histidine 294.

The protein belongs to the 'GDXG' lipolytic enzyme family. As to expression, expressed in leaves, stems, flowers and siliques.

The catalysed reaction is a carboxylic ester + H2O = an alcohol + a carboxylate + H(+). Functionally, carboxylesterase acting on esters with varying acyl chain length. The chain is Probable carboxylesterase 8 (CXE8) from Arabidopsis thaliana (Mouse-ear cress).